The primary structure comprises 717 residues: Delta-like protein D (717 aa).

A signal peptide spans 1–19 (MGRLMIAVLLCVMISQGFC). Residues 20-547 (SGVFELKLQE…EEDDGGFPWT (528 aa)) lie on the Extracellular side of the membrane. Positions 175-219 (FVCDEHYYGEGCSVFCRPRDDTFGHFTCGERGEIICNSGWKGQYC) constitute a DSL domain. 26 disulfide bridges follow: C177-C186, C190-C202, C210-C219, C224-C235, C228-C241, C243-C252, C261-C266, C274-C283, C290-C302, C296-C312, C314-C323, C330-C341, C335-C350, C352-C361, C368-C379, C373-C389, C391-C400, C407-C418, C412-C427, C429-C438, C445-C456, C450-C465, C467-C476, C483-C494, C488-C503, and C505-C514. EGF-like domains follow at residues 220–253 (TEPI…KYCD), 257–284 (RYPG…LFCN), and 286–324 (DLNY…DSCE). One can recognise an EGF-like 4; calcium-binding domain in the interval 326-362 (EVNECSGSPCRNGGSCTDLENTYSCTCPPGFYGRNCE). EGF-like domains lie at 364 to 401 (SAMT…FNCE) and 403 to 439 (KIDH…THCE). The region spanning 441–477 (NIDECATYPCQNGGTCQDGLSDYTCTCPPGYTGKNCT) is the EGF-like 7; calcium-binding domain. N475 is a glycosylation site (N-linked (GlcNAc...) asparagine). In terms of domain architecture, EGF-like 8 spans 479-515 (AVNKCLHNPCHNGATCHEMDNRYVCACIPGYGGRNCQ). The helical transmembrane segment at 548 to 568 (AVCAGIILVLLVLIGGSVFVI) threads the bilayer. Residues 569–717 (YIRLKLQQRS…KDECIIATEV (149 aa)) are Cytoplasmic-facing. The disordered stretch occupies residues 649–693 (EDLGKEDSERSEATKCEPLDSDSEEKHRNHLKSDSSERKRTESLC).

Interacts with mib. Ubiquitinated by mib, leading to its endocytosis and subsequent degradation. Expressed in both mesodermal and neuroectodermal regions. In the developing nervous system, it is expressed in overlapping regions with deltaB (dlb) and deltaA (dla); in the neural plate, dld is expressed in patches of contiguous cells with dla, while dlb is confined to scattered cells within those patches that will differentiate as neurons. In somites, it marks the anterior part of each formed somite, while deltaC (dlc) marks the posterior part. In 24 hours embryos, expressed in the hindbrain in stripes adjacent to rhombomere boundaries, but not in the actual boundary cells.

Its subcellular location is the membrane. Its function is as follows. Acts as a ligand for Notch receptors and is involved in primary neurogenesis and somitogenesis. Can activate Notch receptors, thereby playing a key role in lateral inhibition, a process that prevents the immediate neighbors of each nascent neural cell from simultaneously embarking on neural differentiation. Required in somite segmentation to keep the oscillations of neighboring presomitic mesoderm cells synchronized. This chain is Delta-like protein D (dld), found in Danio rerio (Zebrafish).